Consider the following 317-residue polypeptide: MDCYLLLLLLLLGLAGQGSADSHPEVLQAPVGSSILVQCHYRLQDVRALKVWCQFLQEGCHPLVTSAVDRRAPGNGRIFLTDLGGGLLQVEMVTLQEEDTGEYGCVVEGAAGPQTLHRVSLLVLPPVPGPREGEEAEDEKETYRIGTGSLLEDPSLDPSASAGPHEFRRRENSIPLIWGAVLLLALVVVAVVIFAVMARKKGNRLVVCGPSQSTGVPGMDPPSAAHRSSDSGLPSDIPHVRLDSPPSFDSIYTGSSLDPPSSEPPAPPSQPPLPPKVLMSSKSVTYATVVFPGGDKGKIASCEPVQDPPNSQTPPSK.

An N-terminal signal peptide occupies residues 1 to 20; the sequence is MDCYLLLLLLLLGLAGQGSA. Positions 21–122 constitute an Ig-like V-type domain; that stretch reads DSHPEVLQAP…PQTLHRVSLL (102 aa). The Extracellular portion of the chain corresponds to 21–175; sequence DSHPEVLQAP…EFRRRENSIP (155 aa). Cystine bridges form between Cys-39-Cys-105 and Cys-53-Cys-60. Residues 147 to 166 form a disordered region; sequence TGSLLEDPSLDPSASAGPHE. Residues 176-196 form a helical membrane-spanning segment; that stretch reads LIWGAVLLLALVVVAVVIFAV. Over 197–317 the chain is Cytoplasmic; sequence MARKKGNRLV…PPNSQTPPSK (121 aa). Residue Cys-208 is the site of S-palmitoyl cysteine attachment. The interval 212–278 is disordered; sequence QSTGVPGMDP…SQPPLPPKVL (67 aa). Residues 261–275 are compositionally biased toward pro residues; the sequence is SSEPPAPPSQPPLPP. A Phosphoserine modification is found at Ser-283. Positions 284–289 match the ITIM motif; the sequence is VTYATV. Positions 295-317 are disordered; sequence DKGKIASCEPVQDPPNSQTPPSK. Polar residues predominate over residues 308-317; sequence PPNSQTPPSK.

When phosphorylated, interacts with PTPN11. When phosphorylated, interacts with PTPN6. Post-translationally, phosphorylated on tyrosine residues. Highly expressed in bone marrow leukocytes, splenic megakaryocytes and platelets. Detected in brain, liver and in peritoneal monocytes.

It is found in the cell membrane. The protein localises to the cytoplasm. In terms of biological role, cell surface receptor that may play a role in the innate and adaptive immune response. The polypeptide is Trem-like transcript 1 protein (Treml1) (Mus musculus (Mouse)).